The chain runs to 623 residues: V-type proton ATPase catalytic subunit A (623 aa).

252 to 259 is an ATP binding site; that stretch reads GAFGCGKT.

Belongs to the ATPase alpha/beta chains family. V-ATPase is a heteromultimeric enzyme composed of a peripheral catalytic V1 complex (main components: subunits A, B, C, D, E, and F) attached to an integral membrane V0 proton pore complex (main component: the proteolipid protein).

It carries out the reaction ATP + H2O + 4 H(+)(in) = ADP + phosphate + 5 H(+)(out). Functionally, catalytic subunit of the peripheral V1 complex of vacuolar ATPase. V-ATPase vacuolar ATPase is responsible for acidifying a variety of intracellular compartments in eukaryotic cells. In Gossypium hirsutum (Upland cotton), this protein is V-type proton ATPase catalytic subunit A (CVA69.24).